We begin with the raw amino-acid sequence, 217 residues long: Adenylate kinase (217 aa).

10–15 (GAGKGT) is a binding site for ATP. The segment at 30 to 59 (STGDMFRAAMKEETPLGLEAKSYIDKGELV) is NMP. Residues Thr31, Arg36, 57–59 (ELV), 85–88 (GFPR), and Gln92 contribute to the AMP site. The LID stretch occupies residues 126 to 163 (GRRICSVCGTTYHLVFNPPKTPGVCDKDGGDLYQRADD). Arg127 is a binding site for ATP. Zn(2+)-binding residues include Cys130 and Cys133. 136 to 137 (TY) provides a ligand contact to ATP. Positions 150 and 153 each coordinate Zn(2+). Residues Arg160 and Arg171 each contribute to the AMP site. Gln199 is a binding site for ATP.

It belongs to the adenylate kinase family. As to quaternary structure, monomer.

It localises to the cytoplasm. The enzyme catalyses AMP + ATP = 2 ADP. The protein operates within purine metabolism; AMP biosynthesis via salvage pathway; AMP from ADP: step 1/1. In terms of biological role, catalyzes the reversible transfer of the terminal phosphate group between ATP and AMP. Plays an important role in cellular energy homeostasis and in adenine nucleotide metabolism. The sequence is that of Adenylate kinase from Bacillus velezensis (strain DSM 23117 / BGSC 10A6 / LMG 26770 / FZB42) (Bacillus amyloliquefaciens subsp. plantarum).